Here is a 787-residue protein sequence, read N- to C-terminus: Exocyst complex component SEC15B (787 aa).

It belongs to the SEC15 family. The exocyst complex is composed of SEC3, SEC5, SEC6, SEC8, SEC10, EXO70A1 and EXO84B. Interacts with EXO84B. Binds to EXO70H1 AND EXO70B2. Binds directly to B1L.

It localises to the cytoplasm. Its subcellular location is the cytosol. It is found in the cytoskeleton. The protein resides in the phragmoplast. The protein localises to the secreted. It localises to the cell wall. Its subcellular location is the extracellular exosome. In terms of biological role, component of the exocyst complex involved in the docking of exocytic vesicles with fusion sites on the plasma membrane during regulated or polarized secretion. Involved in polarized cell growth and organ morphogenesis. During cytokinesis, involved in cell plate initiation, cell plate maturation and formation of new primary cell wall. This Arabidopsis thaliana (Mouse-ear cress) protein is Exocyst complex component SEC15B.